The sequence spans 416 residues: Splicing factor U2AF 50 kDa subunit (416 aa).

The segment covering 1–10 (MGYDDRERDR) has biased composition (basic and acidic residues). Residues 1 to 47 (MGYDDRERDRERRRHRSRSRDRHRERSRDRRHHRNSRRKPSLYWDVP) form a disordered region. Composition is skewed to basic residues over residues 11-21 (ERRRHRSRSRD) and 29-40 (DRRHHRNSRRKP). RRM domains lie at 93 to 175 (RRLY…RPHD), 207 to 285 (HKIF…RASV), and 318 to 408 (EVLC…YFDP).

It belongs to the splicing factor SR family. In terms of assembly, forms a heterodimer with the U2AF small subunit.

The protein localises to the nucleus. Necessary for the splicing of pre-mRNA. Binds to the polypyrimidine tract of introns early during spliceosome assembly. The chain is Splicing factor U2AF 50 kDa subunit (U2af50) from Drosophila melanogaster (Fruit fly).